The primary structure comprises 386 residues: Succinate--CoA ligase [ADP-forming] subunit beta (386 aa).

An ATP-grasp domain is found at 9 to 244; that stretch reads KEILRNFGVP…LDEEDPAEVE (236 aa). ATP-binding positions include K46, 53-55, E99, A102, and E107; that span reads GRG. 2 residues coordinate Mg(2+): N199 and D213. Substrate is bound by residues N264 and 321 to 323; that span reads GIM.

This sequence belongs to the succinate/malate CoA ligase beta subunit family. Heterotetramer of two alpha and two beta subunits. Mg(2+) is required as a cofactor.

The catalysed reaction is succinate + ATP + CoA = succinyl-CoA + ADP + phosphate. The enzyme catalyses GTP + succinate + CoA = succinyl-CoA + GDP + phosphate. It participates in carbohydrate metabolism; tricarboxylic acid cycle; succinate from succinyl-CoA (ligase route): step 1/1. Succinyl-CoA synthetase functions in the citric acid cycle (TCA), coupling the hydrolysis of succinyl-CoA to the synthesis of either ATP or GTP and thus represents the only step of substrate-level phosphorylation in the TCA. The beta subunit provides nucleotide specificity of the enzyme and binds the substrate succinate, while the binding sites for coenzyme A and phosphate are found in the alpha subunit. The chain is Succinate--CoA ligase [ADP-forming] subunit beta from Polaromonas naphthalenivorans (strain CJ2).